A 332-amino-acid chain; its full sequence is Zinc finger protein CONSTANS-LIKE 13 (332 aa).

The Zn(2+) site is built by C13, C16, C36, H41, C56, C59, C79, and H84. The B box-type 1; atypical zinc finger occupies 13–55; sequence CDYCDSSVALVYCKADSAKLCLACDKQVHVANQLFAKHFRSLL. A B box-type 2; atypical zinc finger spans residues 56-96; the sequence is CDSCNESPSSLFCETERSVLCQNCDWQHHTASSSLHSRRPF. Positions 287-329 constitute a CCT domain; sequence RNSALSRYKEKKKSRRYEKHIRYESRKVRAESRTRIRGRFAKA.

It belongs to the CONSTANS family.

The protein resides in the nucleus. This chain is Zinc finger protein CONSTANS-LIKE 13 (COL13), found in Arabidopsis thaliana (Mouse-ear cress).